The following is a 388-amino-acid chain: F-box protein ETP2 (388 aa).

One can recognise an F-box domain in the interval 2–48; sequence KTIQEQLPNDLVEEILCRVPATSLRRLRSTCKAWNRLFKGDRILASK.

Interacts with EIN2 (via C-terminus).

Functionally, negative regulator of EIN2 protein stability. The polypeptide is F-box protein ETP2 (Arabidopsis thaliana (Mouse-ear cress)).